A 391-amino-acid polypeptide reads, in one-letter code: RNA-binding motif protein, X chromosome (391 aa).

Met1 is subject to N-acetylmethionine; in Heterogeneous nuclear ribonucleoprotein G; alternate. Val2 carries the post-translational modification N-acetylvaline; in Heterogeneous nuclear ribonucleoprotein G, N-terminally processed. One can recognise an RRM domain in the interval 8–86 (GKLFIGGLNT…KAIKVEQATK (79 aa)). A Glycyl lysine isopeptide (Lys-Gly) (interchain with G-Cter in SUMO2) cross-link involves residue Lys22. An N6-acetyllysine modification is found at Lys30. Basic and acidic residues predominate over residues 61 to 80 (DAKDAARDMNGKSLDGKAIK). The tract at residues 61–391 (DAKDAARDMN…SDRGGGRSRY (331 aa)) is disordered. Glycyl lysine isopeptide (Lys-Gly) (interchain with G-Cter in SUMO2) cross-links involve residues Lys80 and Lys86. Phosphoserine occurs at positions 88 and 91. Gly residues predominate over residues 109-120 (LRGGRGGSGGTR). An omega-N-methylarginine mark is found at Arg125, Arg144, and Arg164. The segment covering 151 to 164 (RGPPPRSGGPPPKR) has biased composition (pro residues). Ser165 carries the phosphoserine modification. An Omega-N-methylarginine modification is found at Arg172. Ser174 is subject to Phosphoserine. The interval 186–236 (GRDSYGGPPRREPLPSRRDVYLSPRDDGYSTKDSYSSRDYPSSRDTRDYAP) is necessary for the association to nascent RNAPII transcripts and nuclear localization. Composition is skewed to basic and acidic residues over residues 194–215 (PRRE…DGYS) and 241–274 (YTYR…DYSD). A phosphoserine mark is found at Ser261, Ser328, Ser329, Ser330, and Ser332. Low complexity predominate over residues 323-337 (SRDSYSSSRSDLYSS). The interval 333 to 391 (DLYSSGRDRVGRQDRGLPPSMERGYPPPRDSYSSSSRGAPRGGGRGGSRSDRGGGRSRY) is necessary for RNA-binding. Positions 338-347 (GRDRVGRQDR) are enriched in basic and acidic residues. Ser352 carries the post-translational modification Phosphoserine. Positions 362–371 (DSYSSSSRGA) are enriched in low complexity. Residues 380–391 (SRSDRGGGRSRY) are compositionally biased toward basic and acidic residues.

In terms of assembly, homomultimer. Found in the supraspliceosome complex. Identified in the spliceosome C complex. Forms a complex with ILF2, ILF3, YLPM1, KHDRBS1, NCOA5 and PPP1CA. Interacts with CLK2, KHDRBS2, KHDRBS3, SAFB/SAFB1, TRA2B and YTHDC1. Interacts with ERAP1; the interaction is RNA-independent. Interacts with PPIA/CYPA. In terms of processing, O-glycosylated. Arg-185 is dimethylated, probably to asymmetric dimethylarginine.

The protein localises to the nucleus. RNA-binding protein that plays several role in the regulation of pre- and post-transcriptional processes. Implicated in tissue-specific regulation of gene transcription and alternative splicing of several pre-mRNAs. Binds to and stimulates transcription from the tumor suppressor TXNIP gene promoter; may thus be involved in tumor suppression. When associated with SAFB, binds to and stimulates transcription from the SREBF1 promoter. Associates with nascent mRNAs transcribed by RNA polymerase II. Component of the supraspliceosome complex that regulates pre-mRNA alternative splice site selection. Can either activate or suppress exon inclusion; acts additively with TRA2B to promote exon 7 inclusion of the survival motor neuron SMN. Represses the splicing of MAPT/Tau exon 10. Binds preferentially to single-stranded 5'-CC[A/C]-rich RNA sequence motifs localized in a single-stranded conformation; probably binds RNA as a homodimer. Binds non-specifically to pre-mRNAs. Also plays a role in the cytoplasmic TNFR1 trafficking pathways; promotes both the IL-1-beta-mediated inducible proteolytic cleavage of TNFR1 ectodomains and the release of TNFR1 exosome-like vesicles to the extracellular compartment. This chain is RNA-binding motif protein, X chromosome (RBMX), found in Macaca fascicularis (Crab-eating macaque).